Here is a 508-residue protein sequence, read N- to C-terminus: Bifunctional purine biosynthesis protein PurH (508 aa).

One can recognise an MGS-like domain in the interval 1–144 (MTRALLSVSD…KNFAGVLPIV (144 aa)).

This sequence belongs to the PurH family.

It catalyses the reaction (6R)-10-formyltetrahydrofolate + 5-amino-1-(5-phospho-beta-D-ribosyl)imidazole-4-carboxamide = 5-formamido-1-(5-phospho-D-ribosyl)imidazole-4-carboxamide + (6S)-5,6,7,8-tetrahydrofolate. The enzyme catalyses IMP + H2O = 5-formamido-1-(5-phospho-D-ribosyl)imidazole-4-carboxamide. Its pathway is purine metabolism; IMP biosynthesis via de novo pathway; 5-formamido-1-(5-phospho-D-ribosyl)imidazole-4-carboxamide from 5-amino-1-(5-phospho-D-ribosyl)imidazole-4-carboxamide (10-formyl THF route): step 1/1. It participates in purine metabolism; IMP biosynthesis via de novo pathway; IMP from 5-formamido-1-(5-phospho-D-ribosyl)imidazole-4-carboxamide: step 1/1. The protein is Bifunctional purine biosynthesis protein PurH of Leuconostoc citreum (strain KM20).